The chain runs to 201 residues: Recombination protein RecR (201 aa).

The C4-type zinc finger occupies 60-75 (CSCCGNVDTSDPCTIC). Residues 83–178 (ATLIVVEDVS…RVTRLAHGVP (96 aa)) enclose the Toprim domain.

The protein belongs to the RecR family.

Its function is as follows. May play a role in DNA repair. It seems to be involved in an RecBC-independent recombinational process of DNA repair. It may act with RecF and RecO. The sequence is that of Recombination protein RecR from Brucella melitensis biotype 1 (strain ATCC 23456 / CCUG 17765 / NCTC 10094 / 16M).